Consider the following 60-residue polypeptide: Large ribosomal subunit protein bL32 (60 aa).

The disordered stretch occupies residues 1 to 60; sequence MAVQQNKKSPSKRGMHRSHDALTNPPLAIEPTTGETHLRHHISPNGFYRGKKVIKTKNDD. The segment covering 49–60 has biased composition (basic residues); it reads RGKKVIKTKNDD.

The protein belongs to the bacterial ribosomal protein bL32 family.

In Nitrosomonas eutropha (strain DSM 101675 / C91 / Nm57), this protein is Large ribosomal subunit protein bL32.